Consider the following 427-residue polypeptide: Glutamate-1-semialdehyde 2,1-aminomutase (427 aa).

Residue lysine 265 is modified to N6-(pyridoxal phosphate)lysine.

The protein belongs to the class-III pyridoxal-phosphate-dependent aminotransferase family. HemL subfamily. As to quaternary structure, homodimer. The cofactor is pyridoxal 5'-phosphate.

Its subcellular location is the cytoplasm. It catalyses the reaction (S)-4-amino-5-oxopentanoate = 5-aminolevulinate. It participates in porphyrin-containing compound metabolism; protoporphyrin-IX biosynthesis; 5-aminolevulinate from L-glutamyl-tRNA(Glu): step 2/2. This chain is Glutamate-1-semialdehyde 2,1-aminomutase, found in Burkholderia ambifaria (strain MC40-6).